We begin with the raw amino-acid sequence, 93 residues long: Integration host factor subunit beta (93 aa).

This sequence belongs to the bacterial histone-like protein family. In terms of assembly, heterodimer of an alpha and a beta chain.

This protein is one of the two subunits of integration host factor, a specific DNA-binding protein that functions in genetic recombination as well as in transcriptional and translational control. The sequence is that of Integration host factor subunit beta from Aliivibrio salmonicida (strain LFI1238) (Vibrio salmonicida (strain LFI1238)).